Reading from the N-terminus, the 445-residue chain is Phosphoglucosamine mutase (445 aa).

Ser102 serves as the catalytic Phosphoserine intermediate. Residues Ser102, Asp241, Asp243, and Asp245 each contribute to the Mg(2+) site. Ser102 carries the phosphoserine modification.

It belongs to the phosphohexose mutase family. Mg(2+) serves as cofactor. Activated by phosphorylation.

It carries out the reaction alpha-D-glucosamine 1-phosphate = D-glucosamine 6-phosphate. Catalyzes the conversion of glucosamine-6-phosphate to glucosamine-1-phosphate. The chain is Phosphoglucosamine mutase from Escherichia coli O139:H28 (strain E24377A / ETEC).